The sequence spans 253 residues: Nurim homolog (253 aa).

Residues 1–2 (MT) are Nuclear-facing. Residues 3–30 (SIAKSIVLLASLATFAYSLYVVGSLMMF) form a helical membrane-spanning segment. The Perinuclear space segment spans residues 31 to 56 (LSTPRSISKAHTWIFNLLDNKSRLQT). The chain crosses the membrane as a helical span at residues 57–78 (AYGPVVFDTLYLIGFIFQHSFL). Topologically, residues 79-96 (KSAVVKKLLAKLGLSGAE) are nuclear. Residues 97–113 (RTIYSLTSSLCLHYLIV) traverse the membrane as a helical segment. Over 114 to 132 (NWLPAQSIVLWQIDVEQSA) the chain is Perinuclear space. Residues 133–161 (PLWWTFVITHGICWVVIFGGSLVMDLPEL) form a helical membrane-spanning segment. The Nuclear segment spans residues 162–188 (LGVKQAYYDLKAYGPPISYKSGELRNL). Residues 189-207 (YAHVRHPSFVGLSVILFAT) traverse the membrane as a helical segment. At 208-213 (NVMSVD) the chain is on the perinuclear space side. Residues 214-231 (RLVMALLLTTYMYLAWST) traverse the membrane as a helical segment. Over 232-253 (DQKDVAYQKIQLQRKKLELKAK) the chain is Nuclear.

Belongs to the nurim family.

It localises to the nucleus inner membrane. The protein is Nurim homolog (nrm) of Drosophila melanogaster (Fruit fly).